The following is a 299-amino-acid chain: Bifunctional protein FolD (299 aa).

Residues 169–171 (GRS), Ser194, and Ile235 each bind NADP(+).

It belongs to the tetrahydrofolate dehydrogenase/cyclohydrolase family. In terms of assembly, homodimer.

It catalyses the reaction (6R)-5,10-methylene-5,6,7,8-tetrahydrofolate + NADP(+) = (6R)-5,10-methenyltetrahydrofolate + NADPH. It carries out the reaction (6R)-5,10-methenyltetrahydrofolate + H2O = (6R)-10-formyltetrahydrofolate + H(+). Its pathway is one-carbon metabolism; tetrahydrofolate interconversion. Functionally, catalyzes the oxidation of 5,10-methylenetetrahydrofolate to 5,10-methenyltetrahydrofolate and then the hydrolysis of 5,10-methenyltetrahydrofolate to 10-formyltetrahydrofolate. The polypeptide is Bifunctional protein FolD (Nostoc sp. (strain PCC 7120 / SAG 25.82 / UTEX 2576)).